A 1938-amino-acid polypeptide reads, in one-letter code: Myosin heavy chain, striated muscle (1938 aa).

The 51-residue stretch at 29-79 folds into the Myosin N-terminal SH3-like domain; that stretch reads DGKKNCWVPDEKEGFASAEIQSSKGDEITVKIVADSSTRTVKKDDIQSMNP. One can recognise a Myosin motor domain in the interval 83–775; sequence EKLEDMANMT…VLGNLEEMRD (693 aa). 176 to 183 lines the ATP pocket; that stretch reads GESGAGKT. An actin-binding region spans residues 653-675; the sequence is LNKLMKNLYSTHPHFVRCIIPNE. The 28-residue stretch at 778-805 folds into the IQ domain; sequence LSKIISMFQAHIRGYLIRKAYKKLQDQR. Residues 836 to 1938 form a rodlike tail (S2 and LMM domains) region; it reads LLSIARQEEE…RSSVSVSASN (1103 aa). Residues 836–1938 are a coiled coil; the sequence is LLSIARQEEE…RSSVSVSASN (1103 aa). 2 stretches are compositionally biased toward basic and acidic residues: residues 1041–1058 and 1212–1225; these read VRGD…DLKS and SKLE…KREM. Disordered regions lie at residues 1041–1062, 1187–1332, 1344–1363, and 1898–1938; these read VRGD…TQEN, SALR…EVRN, LEEE…KANN, and HELE…SASN. Positions 1265–1285 are enriched in polar residues; that stretch reads RSINELQSQKSRLQAENSDLT. Composition is skewed to basic and acidic residues over residues 1286–1303, 1310–1332, and 1344–1354; these read RQLE…KEKS, EDAR…EVRN, and LEEEQESKSDV. A compositionally biased stretch (low complexity) spans 1922–1938; that stretch reads RSSVSVQRSSVSVSASN.

The protein belongs to the TRAFAC class myosin-kinesin ATPase superfamily. Myosin family. As to quaternary structure, muscle myosin is a hexameric protein that consists of 2 heavy chain subunits (MHC), 2 alkali light chain subunits (MLC) and 2 regulatory light chain subunits (MLC-2).

The protein resides in the cytoplasm. Its subcellular location is the myofibril. Functionally, muscle contraction. In terms of biological role, myosin is a protein that binds to F-actin and has ATPase activity that is activated by F-actin. This chain is Myosin heavy chain, striated muscle, found in Argopecten irradians (Bay scallop).